Here is a 427-residue protein sequence, read N- to C-terminus: Enolase (427 aa).

Gln162 contacts (2R)-2-phosphoglycerate. Glu204 acts as the Proton donor in catalysis. Asp241, Glu283, and Asp310 together coordinate Mg(2+). (2R)-2-phosphoglycerate-binding residues include Lys335, Arg364, Ser365, and Lys386. The active-site Proton acceptor is Lys335.

This sequence belongs to the enolase family. Mg(2+) serves as cofactor.

The protein localises to the cytoplasm. It localises to the secreted. Its subcellular location is the cell surface. The catalysed reaction is (2R)-2-phosphoglycerate = phosphoenolpyruvate + H2O. The protein operates within carbohydrate degradation; glycolysis; pyruvate from D-glyceraldehyde 3-phosphate: step 4/5. In terms of biological role, catalyzes the reversible conversion of 2-phosphoglycerate (2-PG) into phosphoenolpyruvate (PEP). It is essential for the degradation of carbohydrates via glycolysis. The polypeptide is Enolase (Mycolicibacterium smegmatis (strain ATCC 700084 / mc(2)155) (Mycobacterium smegmatis)).